Reading from the N-terminus, the 124-residue chain is Large ribosomal subunit protein bL17 (124 aa).

This sequence belongs to the bacterial ribosomal protein bL17 family. In terms of assembly, part of the 50S ribosomal subunit. Contacts protein L32.

The protein is Large ribosomal subunit protein bL17 of Acidithiobacillus ferrooxidans (strain ATCC 23270 / DSM 14882 / CIP 104768 / NCIMB 8455) (Ferrobacillus ferrooxidans (strain ATCC 23270)).